The primary structure comprises 82 residues: ATP synthase subunit c (82 aa).

The next 2 helical transmembrane spans lie at 6 to 26 (AAAS…GPGI) and 57 to 77 (LAFM…LLFA).

It belongs to the ATPase C chain family. In terms of assembly, F-type ATPases have 2 components, F(1) - the catalytic core - and F(0) - the membrane proton channel. F(1) has five subunits: alpha(3), beta(3), gamma(1), delta(1), epsilon(1). F(0) has four main subunits: a(1), b(1), b'(1) and c(10-14). The alpha and beta chains form an alternating ring which encloses part of the gamma chain. F(1) is attached to F(0) by a central stalk formed by the gamma and epsilon chains, while a peripheral stalk is formed by the delta, b and b' chains.

The protein resides in the cell inner membrane. In terms of biological role, f(1)F(0) ATP synthase produces ATP from ADP in the presence of a proton or sodium gradient. F-type ATPases consist of two structural domains, F(1) containing the extramembraneous catalytic core and F(0) containing the membrane proton channel, linked together by a central stalk and a peripheral stalk. During catalysis, ATP synthesis in the catalytic domain of F(1) is coupled via a rotary mechanism of the central stalk subunits to proton translocation. Its function is as follows. Key component of the F(0) channel; it plays a direct role in translocation across the membrane. A homomeric c-ring of between 10-14 subunits forms the central stalk rotor element with the F(1) delta and epsilon subunits. This Gloeobacter violaceus (strain ATCC 29082 / PCC 7421) protein is ATP synthase subunit c.